Here is a 632-residue protein sequence, read N- to C-terminus: Epithelial sodium channel subunit alpha (632 aa).

The Cytoplasmic segment spans residues 1–49 (MTKEEKNEKEALIEFFSSYRELFEFFCSNTTIHGAIRLVCSRRNRMKTA). Residues 50–70 (FWLVLFLVTFGLMYWQFGLLF) form a helical membrane-spanning segment. Over 71–520 (GQYFSYPVSI…SQWSLWFGSS (450 aa)) the chain is Extracellular. Disulfide bonds link C97-C264, C189-C196, C241-C248, C355-C440, C377-C417, C377-C436, C381-C432, C390-C417, C390-C440, and C392-C406. The chain crosses the membrane as a helical span at residues 521–541 (VLSVVEMLELVIDFVIIGVMI). Residues 542-632 (LLHRYYYKKA…YYEENGGRRN (91 aa)) are Cytoplasmic-facing. The segment covering 612–622 (SRSSSMRSNRS) has biased composition (low complexity). The disordered stretch occupies residues 612-632 (SRSSSMRSNRSYYEENGGRRN). The segment covering 623 to 632 (YYEENGGRRN) has biased composition (basic and acidic residues).

Belongs to the amiloride-sensitive sodium channel (TC 1.A.6) family. SCNN1A subfamily. As to quaternary structure, heterotrimer; containing an alpha/SCNN1A, a beta/SCNN1B and a gamma/SCNN1G subunit. Interacts with shroom1.

It is found in the apical cell membrane. The protein localises to the cell projection. It localises to the cilium. The protein resides in the cytoplasmic granule. Its subcellular location is the cytoplasm. It is found in the cytoplasmic vesicle. The protein localises to the secretory vesicle. It localises to the acrosome. The protein resides in the flagellum. The enzyme catalyses Na(+)(in) = Na(+)(out). Originally identified and characterized by its inhibition by the diuretic drug amiloride. This is one of the three pore-forming subunits of the heterotrimeric epithelial sodium channel (ENaC), a critical regulator of sodium balance and fluid homeostasis. ENaC operates in epithelial tissues, where it mediates the electrodiffusion of sodium ions from extracellular fluid through the apical membrane of cells, with water following osmotically. It plays a key role in maintaining sodium homeostasis through electrogenic sodium reabsorption in the kidneys. In Xenopus laevis (African clawed frog), this protein is Epithelial sodium channel subunit alpha.